Here is a 400-residue protein sequence, read N- to C-terminus: uncharacterized protein (400 aa).

To M.jannaschii MJ1544 and MJ1637.

This is an uncharacterized protein from Haemophilus influenzae (strain ATCC 51907 / DSM 11121 / KW20 / Rd).